Consider the following 353-residue polypeptide: Ribosomal RNA small subunit methyltransferase (353 aa).

The span at Met1–Lys10 shows a compositional bias: basic residues. The tract at residues Met1–Gln23 is disordered. 6 residues coordinate S-adenosyl-L-methionine: His35, Leu37, Gly62, Glu83, Asp111, and Asn126. Residues Ala270 to Lys313 are disordered. Over residues Met285 to Glu308 the composition is skewed to acidic residues.

Belongs to the class I-like SAM-binding methyltransferase superfamily. rRNA adenine N(6)-methyltransferase family. In terms of tissue distribution, expressed in rapidly dividing tissues, including root meristems and lateral root primordia, developing cotyledons and leaves, petals, anther, pollen grains and silique abscission zone.

It is found in the nucleus. Its subcellular location is the nucleolus. The enzyme catalyses adenosine(1785)/adenosine(1786) in 18S rRNA + 4 S-adenosyl-L-methionine = N(6)-dimethyladenosine(1785)/N(6)-dimethyladenosine(1786) in 18S rRNA + 4 S-adenosyl-L-homocysteine + 4 H(+). Its function is as follows. N6-adenine methyltransferase which modifies the AA dinucleotide at the plant nuclear 18S rRNA nucleotides A1785 and A1786. Required for generating appropriate patterns of gene expression during root development, including the cell-specific expression of transcriptional regulators involved in root hair and non-hair cells patterning. This chain is Ribosomal RNA small subunit methyltransferase, found in Arabidopsis thaliana (Mouse-ear cress).